Consider the following 157-residue polypeptide: MGLPTDFKELQIPGYVLKTLYVIGFFRDMVDALCPYIGLPSFLDHNETSRSDPTRLALSTSATLANELIPVVRFSDLLTDPEDCCTVCLSDFVSDDKIRQLPKCGHVFHHRCLDRWIVDCNKITCPICRNRFLPEEKSTPFDWGTSDWFRDEVESTN.

Residues 85–129 (CTVCLSDFVSDDKIRQLPKCGHVFHHRCLDRWIVDCNKITCPICR) form an RING-type; atypical zinc finger.

It catalyses the reaction S-ubiquitinyl-[E2 ubiquitin-conjugating enzyme]-L-cysteine + [acceptor protein]-L-lysine = [E2 ubiquitin-conjugating enzyme]-L-cysteine + N(6)-ubiquitinyl-[acceptor protein]-L-lysine.. It functions in the pathway protein modification; protein ubiquitination. Possesses E3 ubiquitin-protein ligase activity when associated with the E2 enzyme UBC8 in vitro. The sequence is that of E3 ubiquitin-protein ligase RHA1B from Arabidopsis thaliana (Mouse-ear cress).